Here is a 36-residue protein sequence, read N- to C-terminus: Probable non-specific lipid-transfer protein (36 aa).

This sequence belongs to the plant LTP family. Phosphorylated by Ca(2+)-dependent protein kinase.

Its function is as follows. Plant non-specific lipid-transfer proteins transfer phospholipids as well as galactolipids across membranes. May play a role in wax or cutin deposition in the cell walls of expanding epidermal cells and certain secretory tissues. The chain is Probable non-specific lipid-transfer protein from Pinus pinea (Italian stone pine).